The chain runs to 156 residues: Succinate dehydrogenase assembly factor 2-B, mitochondrial (156 aa).

The N-terminal 12 residues, 1-12 (MLRQILSSAVAK), are a transit peptide targeting the mitochondrion.

This sequence belongs to the SDHAF2 family. Interacts with the flavoprotein subunit within the SDH catalytic dimer.

It is found in the mitochondrion matrix. Plays an essential role in the assembly of succinate dehydrogenase (SDH), an enzyme complex (also referred to as respiratory complex II) that is a component of both the tricarboxylic acid (TCA) cycle and the mitochondrial electron transport chain, and which couples the oxidation of succinate to fumarate with the reduction of ubiquinone (coenzyme Q) to ubiquinol. Required for flavinylation (covalent attachment of FAD) of the flavoprotein subunit of the SDH catalytic dimer. The polypeptide is Succinate dehydrogenase assembly factor 2-B, mitochondrial (Drosophila willistoni (Fruit fly)).